The sequence spans 92 residues: MGRSLKKGPFADHHLLAKVDKANEAGDKHVIKTWSRRSTIFPEFIGHTIAVYDGRKHVPVYVTEDMVGHKLGEFAPTRSYKGHAGNDKKTKR.

The protein belongs to the universal ribosomal protein uS19 family.

Protein S19 forms a complex with S13 that binds strongly to the 16S ribosomal RNA. The chain is Small ribosomal subunit protein uS19 from Exiguobacterium sibiricum (strain DSM 17290 / CCUG 55495 / CIP 109462 / JCM 13490 / 255-15).